A 971-amino-acid polypeptide reads, in one-letter code: Exportin-2 (971 aa).

N-acetylmethionine is present on M1. The Importin N-terminal domain occupies 29-102 (AEKFLESVEG…KANIVHLMLS (74 aa)). S112 is subject to Phosphoserine. K574 and K824 each carry N6-acetyllysine. S931 carries the post-translational modification Phosphoserine.

The protein belongs to the XPO2/CSE1 family. In terms of assembly, found in a complex with CSE1L/XPO2, Ran and KPNA2. Binds with high affinity to importin-alpha only in the presence of RanGTP. The complex is dissociated by the combined action of RanBP1 and RanGAP1. Interacts with CFTR.

Its subcellular location is the cytoplasm. The protein localises to the nucleus. Export receptor for importin-alpha. Mediates importin-alpha re-export from the nucleus to the cytoplasm after import substrates (cargos) have been released into the nucleoplasm. In the nucleus binds cooperatively to importin-alpha and to the GTPase Ran in its active GTP-bound form. Docking of this trimeric complex to the nuclear pore complex (NPC) is mediated through binding to nucleoporins. Upon transit of a nuclear export complex into the cytoplasm, disassembling of the complex and hydrolysis of Ran-GTP to Ran-GDP (induced by RANBP1 and RANGAP1, respectively) cause release of the importin-alpha from the export receptor. CSE1L/XPO2 then return to the nuclear compartment and mediate another round of transport. The directionality of nuclear export is thought to be conferred by an asymmetric distribution of the GTP- and GDP-bound forms of Ran between the cytoplasm and nucleus. The sequence is that of Exportin-2 (CSE1L) from Bos taurus (Bovine).